The chain runs to 193 residues: Holliday junction branch migration complex subunit RuvA (193 aa).

The segment at 1–64 (MIGRIAGTLI…EDAHLLYGFG (64 aa)) is domain I. The interval 65 to 143 (TAAERETFRQ…ADLGTVPGGP (79 aa)) is domain II. Residues 144 to 151 (AVSDDAVD) form a flexible linker region. Positions 151–193 (DVLNALLALGYSDKEAAQAIKQVPAGTGVSEGIKLALKALSKG) are domain III.

It belongs to the RuvA family. As to quaternary structure, homotetramer. Forms an RuvA(8)-RuvB(12)-Holliday junction (HJ) complex. HJ DNA is sandwiched between 2 RuvA tetramers; dsDNA enters through RuvA and exits via RuvB. An RuvB hexamer assembles on each DNA strand where it exits the tetramer. Each RuvB hexamer is contacted by two RuvA subunits (via domain III) on 2 adjacent RuvB subunits; this complex drives branch migration. In the full resolvosome a probable DNA-RuvA(4)-RuvB(12)-RuvC(2) complex forms which resolves the HJ.

The protein resides in the cytoplasm. Functionally, the RuvA-RuvB-RuvC complex processes Holliday junction (HJ) DNA during genetic recombination and DNA repair, while the RuvA-RuvB complex plays an important role in the rescue of blocked DNA replication forks via replication fork reversal (RFR). RuvA specifically binds to HJ cruciform DNA, conferring on it an open structure. The RuvB hexamer acts as an ATP-dependent pump, pulling dsDNA into and through the RuvAB complex. HJ branch migration allows RuvC to scan DNA until it finds its consensus sequence, where it cleaves and resolves the cruciform DNA. This Ralstonia nicotianae (strain ATCC BAA-1114 / GMI1000) (Ralstonia solanacearum) protein is Holliday junction branch migration complex subunit RuvA.